The chain runs to 421 residues: Phaseolin, beta-type (421 aa).

The first 24 residues, methionine 1 to alanine 24, serve as a signal peptide directing secretion. The 154-residue stretch at lysine 237–methionine 390 folds into the Cupin type-1 domain. N-linked (GlcNAc...) asparagine glycans are attached at residues asparagine 252 and asparagine 341.

This sequence belongs to the 7S seed storage protein family. As to quaternary structure, homotrimer that associates to form a dodecamer.

The protein localises to the vacuole. It is found in the aleurone grain. In terms of biological role, major seed storage protein. In Phaseolus vulgaris (Kidney bean), this protein is Phaseolin, beta-type.